We begin with the raw amino-acid sequence, 243 residues long: Probable transcriptional regulatory protein BAV2207 (243 aa).

A disordered region spans residues 1–21 (MAGHSKWANIQHRKGRQDAKR).

The protein belongs to the TACO1 family.

The protein resides in the cytoplasm. This chain is Probable transcriptional regulatory protein BAV2207, found in Bordetella avium (strain 197N).